Here is a 127-residue protein sequence, read N- to C-terminus: Large ribosomal subunit protein bL12 (127 aa).

This sequence belongs to the bacterial ribosomal protein bL12 family. As to quaternary structure, homodimer. Part of the ribosomal stalk of the 50S ribosomal subunit. Forms a multimeric L10(L12)X complex, where L10 forms an elongated spine to which 2 to 4 L12 dimers bind in a sequential fashion. Binds GTP-bound translation factors.

Forms part of the ribosomal stalk which helps the ribosome interact with GTP-bound translation factors. Is thus essential for accurate translation. The sequence is that of Large ribosomal subunit protein bL12 from Symbiobacterium thermophilum (strain DSM 24528 / JCM 14929 / IAM 14863 / T).